Here is a 577-residue protein sequence, read N- to C-terminus: Arginine--tRNA ligase (577 aa).

A 'HIGH' region motif is present at residues 122–132; sequence PNVAKEMHVGH.

It belongs to the class-I aminoacyl-tRNA synthetase family. As to quaternary structure, monomer.

The protein localises to the cytoplasm. It carries out the reaction tRNA(Arg) + L-arginine + ATP = L-arginyl-tRNA(Arg) + AMP + diphosphate. This chain is Arginine--tRNA ligase, found in Vibrio campbellii (strain ATCC BAA-1116).